The following is a 142-amino-acid chain: Large ribosomal subunit protein uL13 (142 aa).

It belongs to the universal ribosomal protein uL13 family. As to quaternary structure, part of the 50S ribosomal subunit.

This protein is one of the early assembly proteins of the 50S ribosomal subunit, although it is not seen to bind rRNA by itself. It is important during the early stages of 50S assembly. In Stenotrophomonas maltophilia (strain K279a), this protein is Large ribosomal subunit protein uL13.